The following is a 378-amino-acid chain: tRNA-specific 2-thiouridylase MnmA (378 aa).

ATP is bound by residues Gly-7–Ser-14 and Met-33. Positions Asn-102 to Asp-104 are interaction with target base in tRNA. The active-site Nucleophile is the Cys-107. Cys-107 and Cys-209 are disulfide-bonded. Gly-132 provides a ligand contact to ATP. The segment at Lys-159–Gln-161 is interaction with tRNA. Residue Cys-209 is the Cysteine persulfide intermediate of the active site. Positions Arg-316–Tyr-317 are interaction with tRNA.

It belongs to the MnmA/TRMU family.

The protein resides in the cytoplasm. The catalysed reaction is S-sulfanyl-L-cysteinyl-[protein] + uridine(34) in tRNA + AH2 + ATP = 2-thiouridine(34) in tRNA + L-cysteinyl-[protein] + A + AMP + diphosphate + H(+). Its function is as follows. Catalyzes the 2-thiolation of uridine at the wobble position (U34) of tRNA, leading to the formation of s(2)U34. This chain is tRNA-specific 2-thiouridylase MnmA, found in Onion yellows phytoplasma (strain OY-M).